Here is a 164-residue protein sequence, read N- to C-terminus: Protein SprT (164 aa).

Residues 14 to 156 enclose the SprT-like domain; sequence QQAETFFKRT…LCRRCREPLV (143 aa). His-69 provides a ligand contact to Zn(2+). Glu-70 is an active-site residue. His-73 is a binding site for Zn(2+).

It belongs to the SprT family. Zn(2+) serves as cofactor.

It is found in the cytoplasm. The chain is Protein SprT from Pseudomonas savastanoi pv. phaseolicola (strain 1448A / Race 6) (Pseudomonas syringae pv. phaseolicola (strain 1448A / Race 6)).